A 301-amino-acid polypeptide reads, in one-letter code: MAAPFDPFPAFEEYAHPERIVSASWLSARLGSPGLKVVESNEDSLLYDIGHLPGAVRIDWAKDLNDPLTRDFIDGEAFAELMNRKGIARDDTVVVYGDKSNWWAAFTLWVFELFGHSDVRLLNGGRDAWMAEERDTSYVVPEYPSANYPVVERVDENQRAFVAEVLGSLTQSGGMTLVDVRTPSEFSGLDEHGNPTSNTGVLRGGHIPGAINLDWSDAVLPNGNFRTRAELDKLYADLNPADDTVVYCQVGDRAAHTWFVLKYLLGFNNVRNYDGSWAEWGNMVRMPIETGENTKNNVSVS.

Rhodanese domains are found at residues 31–138 and 171–289; these read GSPG…DTSY and QSGG…MPIE. The active-site Cysteine persulfide intermediate is cysteine 248. Substrate is bound at residue arginine 253.

It carries out the reaction thiosulfate + hydrogen cyanide = thiocyanate + sulfite + 2 H(+). In Corynebacterium glutamicum (strain ATCC 13032 / DSM 20300 / JCM 1318 / BCRC 11384 / CCUG 27702 / LMG 3730 / NBRC 12168 / NCIMB 10025 / NRRL B-2784 / 534), this protein is Thiosulfate sulfurtransferase (thtR).